The following is a 510-amino-acid chain: MATIDSMNKDTTRLSDGPDWTFDLLDVYLAEIDRVAKLYRLDTYPHQIEVITSEQMMDAYSSVGMPINYPHWSFGKKFIETERLYKHGQQGLAYEIVINSNPCIAYLMEENTITMQALVMAHACYGHNSFFKNNYLFRSWTDASSIVDYLIFARKYITECEERYGVDEVERLLDSCHALMNYGVDRYKRPQKISLQEEKARQKSREEYLQSQVNMLWRTLPKREEEKTVAEARRYPSEPQENLLYFMEKNAPLLESWQREILRIVRKVSQYFYPQKQTQVMNEGWATFWHYTILNHLYDEGKVTERFMLEFLHSHTNVVFQPPYNSPWYSGINPYALGFAMFQDIKRICQSPTEEDKYWFPDIAGSDWLETLHFAMRDFKDESFISQFLSPKVMRDFRFFTVLDDDRHNYLEISAIHNEEGYREIRNRLSSQYNLSNLEPNIQIWNVDLRGDRSLTLRYIPHNRAPLDRGRKEVLKHVHRLWGFDVMLEQQNEDGSIELLERCPPRMGNL.

It to B.subtilis SpoVR.

This is an uncharacterized protein from Escherichia coli (strain K12).